Here is a 342-residue protein sequence, read N- to C-terminus: Heat-inducible transcription repressor HrcA (342 aa).

It belongs to the HrcA family.

In terms of biological role, negative regulator of class I heat shock genes (grpE-dnaK-dnaJ and groELS operons). Prevents heat-shock induction of these operons. This Leptospira interrogans serogroup Icterohaemorrhagiae serovar copenhageni (strain Fiocruz L1-130) protein is Heat-inducible transcription repressor HrcA.